Here is a 223-residue protein sequence, read N- to C-terminus: DNA mismatch repair protein MutH (223 aa).

The protein belongs to the MutH family.

The protein resides in the cytoplasm. Functionally, sequence-specific endonuclease that cleaves unmethylated GATC sequences. It is involved in DNA mismatch repair. The chain is DNA mismatch repair protein MutH from Shewanella oneidensis (strain ATCC 700550 / JCM 31522 / CIP 106686 / LMG 19005 / NCIMB 14063 / MR-1).